We begin with the raw amino-acid sequence, 331 residues long: Meiotic recombination protein W68 (331 aa).

Positions 1–120 (MDEFSENIER…LGILAASKGL (120 aa)) constitute a Topo IIA-type catalytic domain. Tyr-81 (O-(5'-phospho-DNA)-tyrosine intermediate) is an active-site residue. Glu-167 and Asp-221 together coordinate Mg(2+).

It belongs to the TOP6A family. It depends on Mg(2+) as a cofactor.

The protein resides in the nucleus. It catalyses the reaction ATP-dependent breakage, passage and rejoining of double-stranded DNA.. Functionally, required for meiotic recombination. Together with mei-P22, mediates DNA cleavage that forms the double-strand breaks (DSB) that initiate meiotic recombination. This Drosophila melanogaster (Fruit fly) protein is Meiotic recombination protein W68.